Reading from the N-terminus, the 206-residue chain is MLSNLMSWQITLPIALAAAIIGYLFGSIPFGLILTRAAGLGDVRSIGSGNIGATNVLRTGNRTLAAATLLLDALKASAAAWVVSYFLGEEAAIIAGFFAFIGHLFPVWIGFKGGKGVATYIGTLLGVAPIMVVLFAAVWLAVAFTTRYSSLSALVAMLVIPVALWILGNEKVAAVMAIMTLISYWKHKANISRLMGGTESKIGAKG.

Transmembrane regions (helical) follow at residues 14 to 34, 67 to 87, 91 to 111, 124 to 144, and 148 to 168; these read IALA…GLIL, ATLL…SYFL, AAII…WIGF, LLGV…AVAF, and YSSL…WILG.

It belongs to the PlsY family. Probably interacts with PlsX.

Its subcellular location is the cell inner membrane. It catalyses the reaction an acyl phosphate + sn-glycerol 3-phosphate = a 1-acyl-sn-glycero-3-phosphate + phosphate. It participates in lipid metabolism; phospholipid metabolism. Functionally, catalyzes the transfer of an acyl group from acyl-phosphate (acyl-PO(4)) to glycerol-3-phosphate (G3P) to form lysophosphatidic acid (LPA). This enzyme utilizes acyl-phosphate as fatty acyl donor, but not acyl-CoA or acyl-ACP. This is Glycerol-3-phosphate acyltransferase 1 from Rhizobium johnstonii (strain DSM 114642 / LMG 32736 / 3841) (Rhizobium leguminosarum bv. viciae).